The sequence spans 353 residues: Photosystem II D2 protein (353 aa).

Thr-2 is modified (N-acetylthreonine). Position 2 is a phosphothreonine (Thr-2). The chain crosses the membrane as a helical span at residues 41–61 (CAYFALGGWFTGTTFVTSWYT). His-118 provides a ligand contact to chlorophyll a. The chain crosses the membrane as a helical span at residues 125-141 (GFMLRQFELARSVQLRP). Gln-130 and Asn-143 together coordinate pheophytin a. The helical transmembrane segment at 153–166 (VFVSVFLIYPLGQS) threads the bilayer. Residue His-198 coordinates chlorophyll a. A helical membrane pass occupies residues 208–228 (AALLCAIHGATVENTLFEDGD). Positions 215 and 262 each coordinate a plastoquinone. His-215 lines the Fe cation pocket. His-269 is a binding site for Fe cation. The chain crosses the membrane as a helical span at residues 279-295 (GLWMSAIGVVGLALNLR).

It belongs to the reaction center PufL/M/PsbA/D family. In terms of assembly, PSII is composed of 1 copy each of membrane proteins PsbA, PsbB, PsbC, PsbD, PsbE, PsbF, PsbH, PsbI, PsbJ, PsbK, PsbL, PsbM, PsbT, PsbX, PsbY, PsbZ, Psb30/Ycf12, at least 3 peripheral proteins of the oxygen-evolving complex and a large number of cofactors. It forms dimeric complexes. The D1/D2 heterodimer binds P680, chlorophylls that are the primary electron donor of PSII, and subsequent electron acceptors. It shares a non-heme iron and each subunit binds pheophytin, quinone, additional chlorophylls, carotenoids and lipids. There is also a Cl(-1) ion associated with D1 and D2, which is required for oxygen evolution. The PSII complex binds additional chlorophylls, carotenoids and specific lipids. is required as a cofactor.

The protein localises to the plastid. It is found in the chloroplast thylakoid membrane. The enzyme catalyses 2 a plastoquinone + 4 hnu + 2 H2O = 2 a plastoquinol + O2. In terms of biological role, photosystem II (PSII) is a light-driven water:plastoquinone oxidoreductase that uses light energy to abstract electrons from H(2)O, generating O(2) and a proton gradient subsequently used for ATP formation. It consists of a core antenna complex that captures photons, and an electron transfer chain that converts photonic excitation into a charge separation. The D1/D2 (PsbA/PsbD) reaction center heterodimer binds P680, the primary electron donor of PSII as well as several subsequent electron acceptors. D2 is needed for assembly of a stable PSII complex. The chain is Photosystem II D2 protein from Lolium perenne (Perennial ryegrass).